The following is a 484-amino-acid chain: Glutamyl-tRNA(Gln) amidotransferase subunit A (484 aa).

Catalysis depends on charge relay system residues lysine 77 and serine 152. The active-site Acyl-ester intermediate is the serine 176.

This sequence belongs to the amidase family. GatA subfamily. Heterotrimer of A, B and C subunits.

The enzyme catalyses L-glutamyl-tRNA(Gln) + L-glutamine + ATP + H2O = L-glutaminyl-tRNA(Gln) + L-glutamate + ADP + phosphate + H(+). Its function is as follows. Allows the formation of correctly charged Gln-tRNA(Gln) through the transamidation of misacylated Glu-tRNA(Gln) in organisms which lack glutaminyl-tRNA synthetase. The reaction takes place in the presence of glutamine and ATP through an activated gamma-phospho-Glu-tRNA(Gln). This chain is Glutamyl-tRNA(Gln) amidotransferase subunit A, found in Lacticaseibacillus casei (strain BL23) (Lactobacillus casei).